A 224-amino-acid chain; its full sequence is uncharacterized protein (224 aa).

Residues 44–139 show a composition bias toward pro residues; sequence TSPPIVPLPT…PSPPPSPSPL (96 aa). Residues 44–145 are disordered; sequence TSPPIVPLPT…PSPLGEPMYY (102 aa).

This is an uncharacterized protein from Lepidoptera (butterflies and moths).